The sequence spans 364 residues: Inactive protein RESTRICTED TEV MOVEMENT 2 (364 aa).

Residues 14–121 form the sHSP domain; it reads VQYEDFVPKS…LPETSRTEAA (108 aa). The A-1 repeat unit spans residues 129 to 133; the sequence is LEEKR. Positions 129–220 are 6 X 5 AA repeats A of L-E-E-[SKR]-[ERK]; that stretch reads LEEKRLLEES…LEERRLEERK (92 aa). One copy of the A-2 repeat lies at 135–139; it reads LEESR. Residues 156–160 form an A-3 repeat; the sequence is LEEKE. The B-1 repeat unit spans residues 163–176; the sequence is IRKLQEEAKAKEEA. The interval 163 to 206 is 3 X 14 AA repeats B of [IMA]-[RK]-K-L-Q-E-E-A-K-A-K-E-[EK]-[LA]; the sequence is IRKLQEEAKAKEEAEMRKLQEEAKAKEEAAAKKLQEEIEAKEKL. The B-2 repeat unit spans residues 178-191; it reads MRKLQEEAKAKEEA. The stretch at 193 to 205 is one B-3 repeat; the sequence is AKKLQEEIEAKEK. An A-4 repeat occupies 206 to 210; it reads LEERK. Residues 211-215 form an A-5 repeat; sequence LEERR. Residues 216-220 form an A-6 repeat; the sequence is LEERK. A helical membrane pass occupies residues 322-342; that stretch reads LMMNVGVAALVIFALGAYVSY. A disordered region spans residues 345 to 364; sequence CSSSSSSSSPSSSSSSTKPE. The segment covering 346–364 has biased composition (low complexity); it reads SSSSSSSSPSSSSSSTKPE.

It belongs to the small heat shock protein (HSP20) family.

The protein localises to the cell membrane. In terms of biological role, seems to not be involved in heat resistance. Unable to mediate restriction of long-distance movement of the pathogenic tobacco etch virus (TEV) without causing a hypersensitive response or inducing systemic acquired resistance. The chain is Inactive protein RESTRICTED TEV MOVEMENT 2 (RTM2) from Arabidopsis thaliana (Mouse-ear cress).